Consider the following 215-residue polypeptide: Thiamine-phosphate synthase (215 aa).

4-amino-2-methyl-5-(diphosphooxymethyl)pyrimidine contacts are provided by residues 43 to 47 (QFRDK) and Asn78. Residues Asp79 and Asp98 each contribute to the Mg(2+) site. A 4-amino-2-methyl-5-(diphosphooxymethyl)pyrimidine-binding site is contributed by Ser117. 2-[(2R,5Z)-2-carboxy-4-methylthiazol-5(2H)-ylidene]ethyl phosphate is bound at residue 143–145 (TNS). Lys146 lines the 4-amino-2-methyl-5-(diphosphooxymethyl)pyrimidine pocket. Residues Gly174 and 194–195 (IS) contribute to the 2-[(2R,5Z)-2-carboxy-4-methylthiazol-5(2H)-ylidene]ethyl phosphate site.

Belongs to the thiamine-phosphate synthase family. The cofactor is Mg(2+).

The enzyme catalyses 2-[(2R,5Z)-2-carboxy-4-methylthiazol-5(2H)-ylidene]ethyl phosphate + 4-amino-2-methyl-5-(diphosphooxymethyl)pyrimidine + 2 H(+) = thiamine phosphate + CO2 + diphosphate. It carries out the reaction 2-(2-carboxy-4-methylthiazol-5-yl)ethyl phosphate + 4-amino-2-methyl-5-(diphosphooxymethyl)pyrimidine + 2 H(+) = thiamine phosphate + CO2 + diphosphate. It catalyses the reaction 4-methyl-5-(2-phosphooxyethyl)-thiazole + 4-amino-2-methyl-5-(diphosphooxymethyl)pyrimidine + H(+) = thiamine phosphate + diphosphate. It functions in the pathway cofactor biosynthesis; thiamine diphosphate biosynthesis; thiamine phosphate from 4-amino-2-methyl-5-diphosphomethylpyrimidine and 4-methyl-5-(2-phosphoethyl)-thiazole: step 1/1. Its function is as follows. Condenses 4-methyl-5-(beta-hydroxyethyl)thiazole monophosphate (THZ-P) and 2-methyl-4-amino-5-hydroxymethyl pyrimidine pyrophosphate (HMP-PP) to form thiamine monophosphate (TMP). This Lactococcus lactis subsp. lactis (strain IL1403) (Streptococcus lactis) protein is Thiamine-phosphate synthase.